A 285-amino-acid polypeptide reads, in one-letter code: Shikimate dehydrogenase (NADP(+)) (285 aa).

Shikimate is bound by residues 21 to 23 (SRS) and T68. K72 (proton acceptor) is an active-site residue. E83 is an NADP(+) binding site. Positions 92 and 107 each coordinate shikimate. Residues 132–136 (GAGGS), 156–161 (NRTMER), and L221 contribute to the NADP(+) site. Residue Y223 participates in shikimate binding. G244 contributes to the NADP(+) binding site.

Belongs to the shikimate dehydrogenase family. In terms of assembly, homodimer.

The enzyme catalyses shikimate + NADP(+) = 3-dehydroshikimate + NADPH + H(+). It functions in the pathway metabolic intermediate biosynthesis; chorismate biosynthesis; chorismate from D-erythrose 4-phosphate and phosphoenolpyruvate: step 4/7. Involved in the biosynthesis of the chorismate, which leads to the biosynthesis of aromatic amino acids. Catalyzes the reversible NADPH linked reduction of 3-dehydroshikimate (DHSA) to yield shikimate (SA). The polypeptide is Shikimate dehydrogenase (NADP(+)) (Nitrobacter hamburgensis (strain DSM 10229 / NCIMB 13809 / X14)).